A 360-amino-acid chain; its full sequence is Probable ribonucleoside-diphosphate reductase small subunit 376L (360 aa).

Fe cation contacts are provided by Asp67, Glu98, and His101. Residue Tyr105 is part of the active site. 3 residues coordinate Fe cation: Glu172, Glu206, and His209.

This sequence belongs to the ribonucleoside diphosphate reductase small chain family. Heterotetramer composed of a homodimer of the large subunit (R1) and a homodimer of the small subunit (R2). Larger multisubunit protein complex are also active, composed of (R1)n(R2)n. Fe cation serves as cofactor.

The catalysed reaction is a 2'-deoxyribonucleoside 5'-diphosphate + [thioredoxin]-disulfide + H2O = a ribonucleoside 5'-diphosphate + [thioredoxin]-dithiol. Its function is as follows. Ribonucleoside-diphosphate reductase holoenzyme provides the precursors necessary for viral DNA synthesis. Allows virus growth in non-dividing cells. Catalyzes the biosynthesis of deoxyribonucleotides from the corresponding ribonucleotides. The polypeptide is Probable ribonucleoside-diphosphate reductase small subunit 376L (Acheta domesticus (House cricket)).